The primary structure comprises 254 residues: Receptor expression-enhancing protein 2 (254 aa).

2 helical membrane-spanning segments follow: residues 1 to 21 (MVSW…YPAY) and 35 to 55 (YVKW…ETLT). Residue Ser-152 is modified to Phosphoserine. A disordered region spans residues 164 to 254 (ALPLQGPDGR…KKTSAGGDSA (91 aa)). The segment covering 195–204 (SVRSGTNQAD) has biased composition (polar residues). Over residues 205-219 (PRTEISEDDTGDKAP) the composition is skewed to basic and acidic residues.

This sequence belongs to the DP1 family. As to quaternary structure, interacts with odorant receptor proteins.

Its subcellular location is the membrane. In terms of biological role, required for endoplasmic reticulum (ER) network formation, shaping and remodeling. May enhance the cell surface expression of odorant receptors. This is Receptor expression-enhancing protein 2 (REEP2) from Bos taurus (Bovine).